A 496-amino-acid polypeptide reads, in one-letter code: Angiopoietin-2 (496 aa).

An N-terminal signal peptide occupies residues 1 to 18; it reads MWQIVFFTLSCDLVLAAA. 6 N-linked (GlcNAc...) asparagine glycosylation sites follow: asparagine 89, asparagine 119, asparagine 133, asparagine 151, asparagine 240, and asparagine 304. Residues 166 to 248 adopt a coiled-coil conformation; it reads STNKLEKQIL…VNNSVLQKQQ (83 aa). Residues 275 to 495 form the Fibrinogen C-terminal domain; it reads KEEQISFRDC…ATTMMIRPAD (221 aa). A disulfide bond links cysteine 284 and cysteine 313. The Ca(2+) site is built by aspartate 429, aspartate 431, cysteine 433, and cysteine 435. Cystine bridges form between cysteine 433/cysteine 435 and cysteine 437/cysteine 450.

Interacts with TEK/TIE2, competing for the same binding site as ANGPT1. Interacts with ITGA5. Interacts with SVEP1/polydom. Interacts with THBD; this interaction significantly inhibits the generation of activated PC and TAFIa/CPB2 by the thrombin/thrombomodulin complex.

The protein resides in the secreted. In terms of biological role, binds to TEK/TIE2, competing for the ANGPT1 binding site, and modulating ANGPT1 signaling. Can induce tyrosine phosphorylation of TEK/TIE2 in the absence of ANGPT1. In the absence of angiogenic inducers, such as VEGF, ANGPT2-mediated loosening of cell-matrix contacts may induce endothelial cell apoptosis with consequent vascular regression. In concert with VEGF, it may facilitate endothelial cell migration and proliferation, thus serving as a permissive angiogenic signal. Involved in the regulation of lymphangiogenesis. The sequence is that of Angiopoietin-2 (ANGPT2) from Homo sapiens (Human).